The sequence spans 223 residues: Large ribosomal subunit protein uL3 (223 aa).

The protein belongs to the universal ribosomal protein uL3 family. In terms of assembly, part of the 50S ribosomal subunit. Forms a cluster with proteins L14 and L19.

In terms of biological role, one of the primary rRNA binding proteins, it binds directly near the 3'-end of the 23S rRNA, where it nucleates assembly of the 50S subunit. This Cutibacterium acnes (strain DSM 16379 / KPA171202) (Propionibacterium acnes) protein is Large ribosomal subunit protein uL3.